A 245-amino-acid polypeptide reads, in one-letter code: Anti-Pycsar protein Apyc1 (245 aa).

Residues 19-219 (FNNNALLYAG…EIQSQILLKH (201 aa)) form a beta-lactamase-like region. Zn(2+) is bound by residues H61, H63, D65, H66, H145, D165, and H219.

The protein belongs to the anti-Pycsar protein Apyc1 family. As to quaternary structure, homodimer. The cofactor is Zn(2+).

The enzyme catalyses 3',5'-cyclic CMP + H2O = CMP + H(+). It carries out the reaction 3',5'-cyclic UMP + H2O = UMP + H(+). Its function is as follows. Counteracts the endogenous Pycsar antiviral defense system. Phosphodiesterase that enables metal-dependent hydrolysis of host cyclic nucleotide Pycsar defense signals such as cCMP and cUMP. This is Anti-Pycsar protein Apyc1 from Paenibacillus sp. (strain J14).